A 243-amino-acid polypeptide reads, in one-letter code: 2-C-methyl-D-erythritol 4-phosphate cytidylyltransferase (243 aa).

It belongs to the IspD/TarI cytidylyltransferase family. IspD subfamily.

The enzyme catalyses 2-C-methyl-D-erythritol 4-phosphate + CTP + H(+) = 4-CDP-2-C-methyl-D-erythritol + diphosphate. The protein operates within isoprenoid biosynthesis; isopentenyl diphosphate biosynthesis via DXP pathway; isopentenyl diphosphate from 1-deoxy-D-xylulose 5-phosphate: step 2/6. Functionally, catalyzes the formation of 4-diphosphocytidyl-2-C-methyl-D-erythritol from CTP and 2-C-methyl-D-erythritol 4-phosphate (MEP). This Aeromonas hydrophila subsp. hydrophila (strain ATCC 7966 / DSM 30187 / BCRC 13018 / CCUG 14551 / JCM 1027 / KCTC 2358 / NCIMB 9240 / NCTC 8049) protein is 2-C-methyl-D-erythritol 4-phosphate cytidylyltransferase.